The primary structure comprises 82 residues: DNA-directed RNA polymerase subunit omega (82 aa).

Belongs to the RNA polymerase subunit omega family. As to quaternary structure, the RNAP catalytic core consists of 2 alpha, 1 beta, 1 beta' and 1 omega subunit. When a sigma factor is associated with the core the holoenzyme is formed, which can initiate transcription.

The enzyme catalyses RNA(n) + a ribonucleoside 5'-triphosphate = RNA(n+1) + diphosphate. Its function is as follows. Promotes RNA polymerase assembly. Latches the N- and C-terminal regions of the beta' subunit thereby facilitating its interaction with the beta and alpha subunits. The chain is DNA-directed RNA polymerase subunit omega from Lachnoclostridium phytofermentans (strain ATCC 700394 / DSM 18823 / ISDg) (Clostridium phytofermentans).